Consider the following 500-residue polypeptide: Histidine ammonia-lyase (500 aa).

The 5-imidazolinone (Ala-Gly) cross-link spans Ala-142–Gly-144. Position 143 is a 2,3-didehydroalanine (Ser) (Ser-143).

It belongs to the PAL/histidase family. In terms of processing, contains an active site 4-methylidene-imidazol-5-one (MIO), which is formed autocatalytically by cyclization and dehydration of residues Ala-Ser-Gly.

The protein resides in the cytoplasm. It catalyses the reaction L-histidine = trans-urocanate + NH4(+). It participates in amino-acid degradation; L-histidine degradation into L-glutamate; N-formimidoyl-L-glutamate from L-histidine: step 1/3. This chain is Histidine ammonia-lyase, found in Macrococcus caseolyticus (strain JCSC5402) (Macrococcoides caseolyticum).